Consider the following 338-residue polypeptide: tRNA N6-adenosine threonylcarbamoyltransferase (338 aa).

2 residues coordinate Fe cation: His111 and His115. Residues 134 to 138 (LVSGG), Asp167, Gly180, and Asn272 contribute to the substrate site. Residue Asp300 participates in Fe cation binding.

This sequence belongs to the KAE1 / TsaD family. Fe(2+) serves as cofactor.

It localises to the cytoplasm. The catalysed reaction is L-threonylcarbamoyladenylate + adenosine(37) in tRNA = N(6)-L-threonylcarbamoyladenosine(37) in tRNA + AMP + H(+). In terms of biological role, required for the formation of a threonylcarbamoyl group on adenosine at position 37 (t(6)A37) in tRNAs that read codons beginning with adenine. Is involved in the transfer of the threonylcarbamoyl moiety of threonylcarbamoyl-AMP (TC-AMP) to the N6 group of A37, together with TsaE and TsaB. TsaD likely plays a direct catalytic role in this reaction. In Shewanella oneidensis (strain ATCC 700550 / JCM 31522 / CIP 106686 / LMG 19005 / NCIMB 14063 / MR-1), this protein is tRNA N6-adenosine threonylcarbamoyltransferase.